A 236-amino-acid polypeptide reads, in one-letter code: UPF0257 lipoprotein YnfC (236 aa).

The N-terminal stretch at 1–16 (MKYKLLPCLLAILLTG) is a signal peptide. C17 carries N-palmitoyl cysteine lipidation. Residue C17 is the site of S-diacylglycerol cysteine attachment.

The protein belongs to the UPF0257 family.

The protein resides in the cell membrane. This is UPF0257 lipoprotein YnfC from Escherichia coli O127:H6 (strain E2348/69 / EPEC).